An 89-amino-acid chain; its full sequence is Small ribosomal subunit protein uS15 (89 aa).

Residues 1–25 (MSLDTTEKQQLINTHQTHGTDTGSA) form a disordered region. Positions 8-25 (KQQLINTHQTHGTDTGSA) are enriched in polar residues.

It belongs to the universal ribosomal protein uS15 family. In terms of assembly, part of the 30S ribosomal subunit. Forms a bridge to the 50S subunit in the 70S ribosome, contacting the 23S rRNA.

Its function is as follows. One of the primary rRNA binding proteins, it binds directly to 16S rRNA where it helps nucleate assembly of the platform of the 30S subunit by binding and bridging several RNA helices of the 16S rRNA. Functionally, forms an intersubunit bridge (bridge B4) with the 23S rRNA of the 50S subunit in the ribosome. The protein is Small ribosomal subunit protein uS15 of Synechococcus sp. (strain CC9605).